A 96-amino-acid chain; its full sequence is Small ribosomal subunit protein bS6 (96 aa).

The protein belongs to the bacterial ribosomal protein bS6 family.

Functionally, binds together with bS18 to 16S ribosomal RNA. The polypeptide is Small ribosomal subunit protein bS6 (Streptococcus pneumoniae serotype 19F (strain G54)).